The sequence spans 162 residues: NADH-quinone oxidoreductase subunit I (162 aa).

4Fe-4S ferredoxin-type domains are found at residues L52 to G82 and T93 to N122. [4Fe-4S] cluster-binding residues include C62, C65, C68, C72, C102, C105, C108, and C112.

Belongs to the complex I 23 kDa subunit family. As to quaternary structure, NDH-1 is composed of 14 different subunits. Subunits NuoA, H, J, K, L, M, N constitute the membrane sector of the complex. [4Fe-4S] cluster is required as a cofactor.

It is found in the cell inner membrane. It catalyses the reaction a quinone + NADH + 5 H(+)(in) = a quinol + NAD(+) + 4 H(+)(out). Functionally, NDH-1 shuttles electrons from NADH, via FMN and iron-sulfur (Fe-S) centers, to quinones in the respiratory chain. The immediate electron acceptor for the enzyme in this species is believed to be ubiquinone. Couples the redox reaction to proton translocation (for every two electrons transferred, four hydrogen ions are translocated across the cytoplasmic membrane), and thus conserves the redox energy in a proton gradient. The polypeptide is NADH-quinone oxidoreductase subunit I (Methylocella silvestris (strain DSM 15510 / CIP 108128 / LMG 27833 / NCIMB 13906 / BL2)).